The sequence spans 356 residues: Cyclin-D2-2 (356 aa).

The span at 325–343 shows a compositional bias: polar residues; that stretch reads LGSSQSNSNNKDYNSQDSA. The tract at residues 325-356 is disordered; sequence LGSSQSNSNNKDYNSQDSAPASKRRRLNTTPI. Positions 346-356 are enriched in basic residues; that stretch reads SKRRRLNTTPI.

The protein belongs to the cyclin family. Cyclin D subfamily.

This chain is Cyclin-D2-2 (CYCD2-2), found in Oryza sativa subsp. japonica (Rice).